Reading from the N-terminus, the 525-residue chain is GMP synthase [glutamine-hydrolyzing] (525 aa).

In terms of domain architecture, Glutamine amidotransferase type-1 spans 9-207 (RILILDFGSQ…VRDICQCEAL (199 aa)). Cys86 (nucleophile) is an active-site residue. Catalysis depends on residues His181 and Glu183. A GMPS ATP-PPase domain is found at 208–400 (WTPAKIIDDA…LGLPYDMLYR (193 aa)). 235-241 (SGGVDSS) provides a ligand contact to ATP.

In terms of assembly, homodimer.

The enzyme catalyses XMP + L-glutamine + ATP + H2O = GMP + L-glutamate + AMP + diphosphate + 2 H(+). Its pathway is purine metabolism; GMP biosynthesis; GMP from XMP (L-Gln route): step 1/1. Functionally, catalyzes the synthesis of GMP from XMP. The sequence is that of GMP synthase [glutamine-hydrolyzing] from Klebsiella pneumoniae (strain 342).